The following is a 492-amino-acid chain: Cytochrome P450 monooxygenase rdc4 (492 aa).

Position 435 (Cys435) interacts with heme.

Belongs to the cytochrome P450 family. Requires heme as cofactor.

Its pathway is secondary metabolite biosynthesis. Cytochrome P450 monooxygenase; part of the gene cluster that mediates the biosynthesis of radicicol, a resorcylic acid lactone (RAL) that irreversibly inhibits the HSP90 molecular chaperone, an important target for cancer chemotherapy. The radicicol cluster encodes only two apparent post-PKS enzymes, a cytochrome P450 monooxygenase (rdc4) and a non-heme halogenase (rdc2) that could introduce the epoxide and the chlorine, respectively. If this cluster includes all the genes required for radicicol biosynthesis, the remaining structural features of radicicol are presumably generated by the PKSs rdc1 and rdc5. The C-2' ketone could arise if the R-PKS rdc5 and NR-PKS rdc1 each carry out four iterations, in contrast to the five iteration-three iteration split for the hypothemycin PKSs. The origin of the cis 5',6' double bond is not known. The radicicol R-PKS rdc5 ER domain may catalyze either double bond isomerization or reduction in the third iteration. In Metacordyceps chlamydosporia (Nematophagous fungus), this protein is Cytochrome P450 monooxygenase rdc4.